We begin with the raw amino-acid sequence, 135 residues long: Large ribosomal subunit protein uL16c (135 aa).

This sequence belongs to the universal ribosomal protein uL16 family. As to quaternary structure, part of the 50S ribosomal subunit.

Its subcellular location is the plastid. The protein localises to the chloroplast. The protein is Large ribosomal subunit protein uL16c of Populus alba (White poplar).